The chain runs to 440 residues: Phenylacetate-coenzyme A ligase (440 aa).

It belongs to the phenylacetyl-CoA ligase family. In terms of assembly, monomer.

The catalysed reaction is 2-phenylacetate + ATP + CoA = phenylacetyl-CoA + AMP + diphosphate. Its pathway is aromatic compound metabolism; phenylacetate degradation. With respect to regulation, inhibition of activity is observed in the presence of a 1 mM of the divalent cations zinc, copper, and nickel. In terms of biological role, catalyzes the activation of phenylacetic acid (PA) to phenylacetyl-CoA (PA-CoA). Involved in the phenylalanine metabolism. This chain is Phenylacetate-coenzyme A ligase (paaK), found in Aromatoleum evansii (Azoarcus evansii).